A 317-amino-acid polypeptide reads, in one-letter code: Ribosomal RNA small subunit methyltransferase H (317 aa).

S-adenosyl-L-methionine is bound by residues 30-32, Asp50, Tyr74, Asp95, and Gln102; that span reads GGH.

It belongs to the methyltransferase superfamily. RsmH family.

The protein localises to the cytoplasm. The enzyme catalyses cytidine(1402) in 16S rRNA + S-adenosyl-L-methionine = N(4)-methylcytidine(1402) in 16S rRNA + S-adenosyl-L-homocysteine + H(+). Its function is as follows. Specifically methylates the N4 position of cytidine in position 1402 (C1402) of 16S rRNA. The polypeptide is Ribosomal RNA small subunit methyltransferase H (Nitrosomonas europaea (strain ATCC 19718 / CIP 103999 / KCTC 2705 / NBRC 14298)).